The following is a 784-amino-acid chain: Lon protease (784 aa).

The Lon N-terminal domain occupies 6 to 207 (LPLMALRDMV…TVITTLTSNI (202 aa)). Residue 356-363 (GPPGVGKT) coordinates ATP. The Lon proteolytic domain maps to 592–773 (EDQIGSTTGL…DQVLKHALVE (182 aa)). Active-site residues include Ser-679 and Lys-722.

It belongs to the peptidase S16 family. In terms of assembly, homohexamer. Organized in a ring with a central cavity.

It is found in the cytoplasm. It carries out the reaction Hydrolysis of proteins in presence of ATP.. ATP-dependent serine protease that mediates the selective degradation of mutant and abnormal proteins as well as certain short-lived regulatory proteins. Required for cellular homeostasis and for survival from DNA damage and developmental changes induced by stress. Degrades polypeptides processively to yield small peptide fragments that are 5 to 10 amino acids long. Binds to DNA in a double-stranded, site-specific manner. This chain is Lon protease, found in Rickettsia typhi (strain ATCC VR-144 / Wilmington).